Consider the following 141-residue polypeptide: Large ribosomal subunit protein uL11 (141 aa).

This sequence belongs to the universal ribosomal protein uL11 family. In terms of assembly, part of the ribosomal stalk of the 50S ribosomal subunit. Interacts with L10 and the large rRNA to form the base of the stalk. L10 forms an elongated spine to which L12 dimers bind in a sequential fashion forming a multimeric L10(L12)X complex. One or more lysine residues are methylated.

Its function is as follows. Forms part of the ribosomal stalk which helps the ribosome interact with GTP-bound translation factors. This Lacticaseibacillus casei (strain BL23) (Lactobacillus casei) protein is Large ribosomal subunit protein uL11.